Consider the following 206-residue polypeptide: Small ribosomal subunit protein uS4 (206 aa).

The 61-residue stretch at 96–156 folds into the S4 RNA-binding domain; the sequence is CRLDNVVYRM…EKAKNQLRIV (61 aa).

Belongs to the universal ribosomal protein uS4 family. Part of the 30S ribosomal subunit. Contacts protein S5. The interaction surface between S4 and S5 is involved in control of translational fidelity.

Functionally, one of the primary rRNA binding proteins, it binds directly to 16S rRNA where it nucleates assembly of the body of the 30S subunit. In terms of biological role, with S5 and S12 plays an important role in translational accuracy. This Pseudomonas fluorescens (strain SBW25) protein is Small ribosomal subunit protein uS4.